The following is a 603-amino-acid chain: Linalool synthase Tps-5031L19, chloroplastic (603 aa).

A chloroplast-targeting transit peptide spans 1 to 36 (MSSMRTYVAIMKKPSVEHVDNVDKKASKPSWRVSLS). Arg322, Asp359, Asp363, Arg500, and Asp503 together coordinate (2E)-geranyl diphosphate. Asp359 and Asp363 together coordinate Mg(2+). The DDXXD motif signature appears at 359 to 363 (DDVYD). 3 residues coordinate Mg(2+): Asp503, Thr507, and Glu511.

This sequence belongs to the terpene synthase family. Tpsb subfamily. Monomer. The cofactor is Mg(2+). Mn(2+) is required as a cofactor.

Its subcellular location is the plastid. It localises to the chloroplast. It carries out the reaction (2E)-geranyl diphosphate + H2O = linalool + diphosphate. It functions in the pathway secondary metabolite biosynthesis; terpenoid biosynthesis. Functionally, monoterpene synthase (mono-TPS) involved in the biosynthesis of monoterpenes natural products. Catalyzes the conversion of (2E)-geranyl diphosphate (GPP) into linalool. This Perilla frutescens var. hirtella (Perilla citriodora) protein is Linalool synthase Tps-5031L19, chloroplastic.